Consider the following 712-residue polypeptide: MSMSDIQQRPQIPTTTTAAVAAAASTNVNTGAATTSTATTGNTPTTTPTSPIENISKVPVKPSVDVPVKPKLEQQQQQQSEQSSKPPPPPPEQQQQHQLPTPPIKPPKTGTTSSSSSTTTSSATSSKISMSGPVCGNCQTQTTPLWRRDETGQVLCNACGLFLKLHGRPRPISLKTDTIKSRNRVKQNGSNSQSSKSSGANTPELKSKEGKSGKKSPKSKKKSLGNGNGNGNSSHDHNTLTPLLPATSNNTPTFKSTTSQSQHQQNQNHHHQHHNHHHHLPNHVLQTHQVPLHYPSSTPTQFAPGLQRITSPLLLSTTSSSSSIRTEPNNNNTSKLTPIQAAAGALENMSNELGPSATFKKGNNINGISLMNKTKKDVSSINGSSTSLSSSSASSSIFSSVAPSTSSSSSLSNGTTINNPAPKLPTLGSKISSPSSQPFTRSTTPLQTLPPLHKIASHESSLPPLHNISTYNNNNSGGGADGGQQSMANYSQTNRSPINGNQDNNNNNNNNNNNNNNGNNNGNNNSNNNGNNFTASAHEVTLLKTRISELELVNDLYRTRIMELEAMEQAARLRENSMKKRLDEVMNLQINYQNLLNNNGGMSSQTQPQPSQQPQQAGQYYSNNNNNNNNDQGSQSISPNVSITGSTTITSPNSRSKIISETTPTHHQQQQGGVGAGDNESIILPPLKRNRTDELTDANGNGNGNDNKKVKI.

Residues 1–13 (MSMSDIQQRPQIP) are compositionally biased toward polar residues. 5 disordered regions span residues 1–20 (MSMS…TAAV), 27–135 (NVNT…GPVC), 173–280 (SLKT…HHHL), 377–533 (DVSS…GNNF), and 596–712 (LNNN…KVKI). 2 stretches are compositionally biased toward low complexity: residues 27–84 (NVNT…EQSS) and 107–131 (PKTG…ISMS). The GATA-type zinc finger occupies 135 to 159 (CGNCQTQTTPLWRRDETGQVLCNAC). Residues 186 to 199 (KQNGSNSQSSKSSG) are compositionally biased toward low complexity. Residues 213-223 (GKKSPKSKKKS) show a composition bias toward basic residues. Residues 246-261 (ATSNNTPTFKSTTSQS) show a composition bias toward polar residues. The span at 268–280 (NHHHQHHNHHHHL) shows a compositional bias: basic residues. Low complexity predominate over residues 379–414 (SSINGSSTSLSSSSASSSIFSSVAPSTSSSSSLSNG). Polar residues-rich tracts occupy residues 429 to 447 (SKIS…TPLQ) and 484 to 498 (QQSM…RSPI). Composition is skewed to low complexity over residues 499 to 532 (NGNQ…NGNN) and 596 to 616 (LNNN…QPQQ). Residues 545-598 (TRISELELVNDLYRTRIMELEAMEQAARLRENSMKKRLDEVMNLQINYQNLLNN) adopt a coiled-coil conformation. Residues 631-667 (DQGSQSISPNVSITGSTTITSPNSRSKIISETTPTHH) show a composition bias toward polar residues.

The protein localises to the nucleus. Probable transcription factor involved in response to fluconazole, LiCl, and copper. The sequence is that of Transcriptional regulator GZF3 (GZF3) from Candida albicans (strain SC5314 / ATCC MYA-2876) (Yeast).